The following is a 473-amino-acid chain: Probable serine/threonine-protein kinase glkA (473 aa).

The segment at 1–84 (MTIPTDNNSS…QSSSTATVNS (84 aa)) is disordered. Over residues 7–84 (NNSSNNKGYN…QSSSTATVNS (78 aa)) the composition is skewed to low complexity. Positions 91-366 (YEIIKQVGQG…IDEIIAHPFL (276 aa)) constitute a Protein kinase domain. Residues 97 to 105 (VGQGTFGKV) and K119 each bind ATP. Residue D208 is the Proton acceptor of the active site. Disordered regions lie at residues 389-418 (GKSS…SNNK) and 437-473 (SSNL…TNTI). The span at 442 to 466 (SIDNSNNGKSSSSSNNIPSLNNSNN) shows a compositional bias: low complexity.

This sequence belongs to the protein kinase superfamily. CMGC Ser/Thr protein kinase family. GSK-3 subfamily.

The catalysed reaction is L-seryl-[tau protein] + ATP = O-phospho-L-seryl-[tau protein] + ADP + H(+). It carries out the reaction L-threonyl-[tau protein] + ATP = O-phospho-L-threonyl-[tau protein] + ADP + H(+). The protein is Probable serine/threonine-protein kinase glkA (glkA) of Dictyostelium discoideum (Social amoeba).